The chain runs to 207 residues: Imidazoleglycerol-phosphate dehydratase (207 aa).

This sequence belongs to the imidazoleglycerol-phosphate dehydratase family.

It is found in the cytoplasm. The enzyme catalyses D-erythro-1-(imidazol-4-yl)glycerol 3-phosphate = 3-(imidazol-4-yl)-2-oxopropyl phosphate + H2O. It functions in the pathway amino-acid biosynthesis; L-histidine biosynthesis; L-histidine from 5-phospho-alpha-D-ribose 1-diphosphate: step 6/9. This is Imidazoleglycerol-phosphate dehydratase (hisB) from Azospirillum brasilense.